The primary structure comprises 234 residues: Adenosine 5'-phosphosulfate reductase (234 aa).

[4Fe-4S] cluster is bound by residues C120, C121, C203, and C206. C229 serves as the catalytic Nucleophile; cysteine thiosulfonate intermediate.

Belongs to the PAPS reductase family. CysH subfamily. [4Fe-4S] cluster is required as a cofactor.

It is found in the cytoplasm. The catalysed reaction is [thioredoxin]-disulfide + sulfite + AMP + 2 H(+) = adenosine 5'-phosphosulfate + [thioredoxin]-dithiol. The protein operates within sulfur metabolism; hydrogen sulfide biosynthesis; sulfite from sulfate. Catalyzes the formation of sulfite from adenosine 5'-phosphosulfate (APS) using thioredoxin as an electron donor. In Bacillus mycoides (strain KBAB4) (Bacillus weihenstephanensis), this protein is Adenosine 5'-phosphosulfate reductase.